The primary structure comprises 466 residues: Asparagine--tRNA ligase (466 aa).

Belongs to the class-II aminoacyl-tRNA synthetase family. Homodimer.

The protein resides in the cytoplasm. It carries out the reaction tRNA(Asn) + L-asparagine + ATP = L-asparaginyl-tRNA(Asn) + AMP + diphosphate + H(+). The sequence is that of Asparagine--tRNA ligase from Shewanella baltica (strain OS185).